Here is a 104-residue protein sequence, read N- to C-terminus: ATP-dependent Clp protease adapter protein ClpS (104 aa).

This sequence belongs to the ClpS family. In terms of assembly, binds to the N-terminal domain of the chaperone ClpA.

Involved in the modulation of the specificity of the ClpAP-mediated ATP-dependent protein degradation. The protein is ATP-dependent Clp protease adapter protein ClpS of Burkholderia mallei (strain NCTC 10247).